The chain runs to 289 residues: Agamous-like MADS-box protein AGL93 (289 aa).

Residues 18-78 (QTCFKKSSLS…GKLIKTWPDD (61 aa)) enclose the MADS-box domain. Positions 151 to 197 (EFGQTRAVSSTTNPLSPPPSLIEDHRHQQRTEPLMSGVSNTEQDLST) are disordered. Polar residues predominate over residues 187–197 (GVSNTEQDLST).

As to expression, expressed in pollen.

The protein resides in the nucleus. Functionally, probable transcription factor. The chain is Agamous-like MADS-box protein AGL93 from Arabidopsis thaliana (Mouse-ear cress).